We begin with the raw amino-acid sequence, 464 residues long: Glycine--tRNA ligase (464 aa).

The substrate site is built by arginine 104 and glutamate 175. ATP is bound by residues 207–209, 217–222, 292–293, and 336–339; these read RNE, FRTREF, EL, and GVNR. 222 to 226 contributes to the substrate binding site; the sequence is FEQME. Residue 332–336 coordinates substrate; sequence EPALG.

This sequence belongs to the class-II aminoacyl-tRNA synthetase family. Homodimer.

Its subcellular location is the cytoplasm. The catalysed reaction is tRNA(Gly) + glycine + ATP = glycyl-tRNA(Gly) + AMP + diphosphate. In terms of biological role, catalyzes the attachment of glycine to tRNA(Gly). The sequence is that of Glycine--tRNA ligase from Leptospira borgpetersenii serovar Hardjo-bovis (strain JB197).